A 369-amino-acid polypeptide reads, in one-letter code: Deacetylase EF_0837 (369 aa).

The Zn(2+) site is built by H58, H60, K152, H186, H209, and D270. K152 carries the post-translational modification N6-carboxylysine.

The protein belongs to the metallo-dependent hydrolases superfamily. Atu3266/EF_0837 deacetylase family. The cofactor is Zn(2+).

In terms of biological role, esterase that can catalyze the deacetylation of acetyl-(R)-mandelate, but with very low efficiency (in vitro). The polypeptide is Deacetylase EF_0837 (Enterococcus faecalis (strain ATCC 700802 / V583)).